Consider the following 186-residue polypeptide: UPF0157 protein SCO7215 (186 aa).

The protein belongs to the UPF0157 (GrpB) family.

This chain is UPF0157 protein SCO7215, found in Streptomyces coelicolor (strain ATCC BAA-471 / A3(2) / M145).